Here is a 288-residue protein sequence, read N- to C-terminus: 4-diphosphocytidyl-2-C-methyl-D-erythritol kinase (288 aa).

Residue K11 is part of the active site. 93–103 (PFGAGLGGGSS) lines the ATP pocket. D135 is an active-site residue.

Belongs to the GHMP kinase family. IspE subfamily.

The catalysed reaction is 4-CDP-2-C-methyl-D-erythritol + ATP = 4-CDP-2-C-methyl-D-erythritol 2-phosphate + ADP + H(+). The protein operates within isoprenoid biosynthesis; isopentenyl diphosphate biosynthesis via DXP pathway; isopentenyl diphosphate from 1-deoxy-D-xylulose 5-phosphate: step 3/6. Catalyzes the phosphorylation of the position 2 hydroxy group of 4-diphosphocytidyl-2C-methyl-D-erythritol. This Chlorobium limicola (strain DSM 245 / NBRC 103803 / 6330) protein is 4-diphosphocytidyl-2-C-methyl-D-erythritol kinase.